The primary structure comprises 691 residues: Threonine--tRNA ligase (691 aa).

Residues 1–66 enclose the TGS domain; that stretch reads MSAPARPAPA…DADVDVIPVT (66 aa). The segment at 265 to 571 is catalytic; the sequence is DHRKLGVELD…LTEHYAGAFP (307 aa). Residues Cys370, His421, and His548 each coordinate Zn(2+).

Belongs to the class-II aminoacyl-tRNA synthetase family. Homodimer. The cofactor is Zn(2+).

Its subcellular location is the cytoplasm. It carries out the reaction tRNA(Thr) + L-threonine + ATP = L-threonyl-tRNA(Thr) + AMP + diphosphate + H(+). Its function is as follows. Catalyzes the attachment of threonine to tRNA(Thr) in a two-step reaction: L-threonine is first activated by ATP to form Thr-AMP and then transferred to the acceptor end of tRNA(Thr). Also edits incorrectly charged L-seryl-tRNA(Thr). This chain is Threonine--tRNA ligase, found in Mycolicibacterium vanbaalenii (strain DSM 7251 / JCM 13017 / BCRC 16820 / KCTC 9966 / NRRL B-24157 / PYR-1) (Mycobacterium vanbaalenii).